A 376-amino-acid chain; its full sequence is Chanoclavine-I aldehyde reductase easA (376 aa).

FMN-binding positions include 29 to 31, A64, Q106, and H173; that span reads PTT. Positions 173 and 176 each coordinate substrate. Y178 (proton donor) is an active-site residue. Residues K225, G297, 323-324, and R324 each bind FMN; that span reads GR. A substrate-binding site is contributed by Y351.

This sequence belongs to the NADH:flavin oxidoreductase/NADH oxidase family. FMN is required as a cofactor.

It carries out the reaction dihydrochanoclavine-I aldehyde + NADP(+) = chanoclavine-I aldehyde + NADPH + H(+). The protein operates within alkaloid biosynthesis; ergot alkaloid biosynthesis. Its function is as follows. Aldehyde reductase; part of the gene cluster that mediates the biosynthesis of fumiclavanine C, a fungal ergot alkaloid. DmaW catalyzes the first step of ergot alkaloid biosynthesis by condensing dimethylallyl diphosphate (DMAP) and tryptophan to form 4-dimethylallyl-L-tryptophan. The second step is catalyzed by the methyltransferase easF that methylates 4-dimethylallyl-L-tryptophan in the presence of S-adenosyl-L-methionine, resulting in the formation of 4-dimethylallyl-L-abrine. The catalase easC and the FAD-dependent oxidoreductase easE then transform 4-dimethylallyl-L-abrine to chanoclavine-I which is further oxidized by EasD in the presence of NAD(+), resulting in the formation of chanoclavine-I aldehyde. EasA reduces chanoclavine-I aldehyde to dihydrochanoclavine-I aldehyde that spontaneously dehydrates to form 6,8-dimethyl-6,7-didehydroergoline. EasG then catalyzes the reduction of 6,8-dimethyl-6,7-didehydroergoline to form festuclavine. Hydrolysis of festuclavine by easM then leads to the formation of fumigaclavine B which is in turn acetylated by easN to fumigaclavine A. Finally, easL catalyzes the conversion of fumigaclavine A into fumigaclavine C by attaching a dimethylallyl moiety to C-2 of the indole nucleus. This is Chanoclavine-I aldehyde reductase easA from Aspergillus fumigatus (strain ATCC MYA-4609 / CBS 101355 / FGSC A1100 / Af293) (Neosartorya fumigata).